A 356-amino-acid polypeptide reads, in one-letter code: Nicotinate-nucleotide--dimethylbenzimidazole phosphoribosyltransferase (356 aa).

Glu-317 (proton acceptor) is an active-site residue.

It belongs to the CobT family. In terms of assembly, homodimer.

It catalyses the reaction 5,6-dimethylbenzimidazole + nicotinate beta-D-ribonucleotide = alpha-ribazole 5'-phosphate + nicotinate + H(+). It participates in nucleoside biosynthesis; alpha-ribazole biosynthesis; alpha-ribazole from 5,6-dimethylbenzimidazole: step 1/2. Catalyzes the synthesis of alpha-ribazole-5'-phosphate from nicotinate mononucleotide (NAMN) and 5,6-dimethylbenzimidazole (DMB). This chain is Nicotinate-nucleotide--dimethylbenzimidazole phosphoribosyltransferase, found in Salmonella paratyphi A (strain AKU_12601).